Here is a 351-residue protein sequence, read N- to C-terminus: Cytochrome c biogenesis protein CcsA (351 aa).

8 helical membrane passes run 17-37 (VLFL…LPAI), 38-58 (NALG…LLGA), 68-88 (LSNL…VHLI), 97-117 (LVGV…TLTL), 143-163 (MMLS…FLVI), 259-279 (IIGL…VWAN), 286-306 (WSWD…AAYL), and 320-340 (AILA…VNLL).

The protein belongs to the CcmF/CycK/Ccl1/NrfE/CcsA family. In terms of assembly, may interact with ccs1.

It is found in the cellular thylakoid membrane. Its function is as follows. Required during biogenesis of c-type cytochromes (cytochrome c6 and cytochrome f) at the step of heme attachment. The sequence is that of Cytochrome c biogenesis protein CcsA from Nostoc sp. (strain PCC 7120 / SAG 25.82 / UTEX 2576).